Reading from the N-terminus, the 2192-residue chain is MSVYTQLISVTEMPMSVIHRPLPSELDEEKVLSLMETIKSGVEIPPIDVNWVKGKDENNNYYFSFGGCHRYEATKRLNLKTIRARIIKSTPSDIKVSPRLAQLPSDQSNYNMERLYVQDIFSKIKNKNQPDLSDLIILFDRLTSLAYQDVHSSKKVKFDYFYMFFNIMLDSPILSVTESTGNRVLHLLLLKKLNGLLFSNVLIQNYCHNEKWVYKLLNYLISRSKHDSDVIGELSITLQIICSFNITTKELKYFFKLLESINEERPYYWNVLIEILQFLFRKRVGPDIYFNFSNSNGGLMVPDKQPFDGGYSISFWMNTDDFTSLKYRPGLFSFFSDENVGFEVTFQQQSLIFQIRTKSKSPCIGSHYRFQPGKWYHVIISHEYFLLRKSQLSLYVNGKLEEKMPLLYPKSDRPFTRCHIGNSVSLQNGFLGRIGSILMIKDALEPAEATLLYQIDKNSTMLQEKVPKEGMTAIYDSQLFLASGRRNIPIIFTYHPRATDKALCFEISSGELPNAATIMDGVSILKSVSPLDQLVYIGGLKMIYPLFAQLGQPINGVEIEMPQDISDHMTTSPLPLSNLNDFISIPSSSGPTPIFPSSIGSGHSSCLFKILLSLLQHHPAFREQIIETHGFQVISFLLKSTPTSSPYWTPDDIDSLSRLISFCAGKQPLWSLAIQNLIMNNFQLWSQTNSLTQIALFETIHQRIQTNPQFWRNLVRVDQWLTILRKFYQLPSASSLSPLSLSSNSSSLSASLSPIINSGSWCKESIEKPIFKDLPTIEKIKKARVQIIVIIRETAQPRLSPSETRWLSLYLKESTIENHDDVIRMLEDIIQPLQSKDTWWDDVMASANLQDENLVLKSRKDFQSTQTKLPSHISYLWDIDCCEEVVKRLEEIKYQDRSNLILFKHWVHIRRVRAGNLNGIKTRLTNGNQTNTPILTKLKQMGIIQSPSTSLSTSSITPPPPNSRNTSTGILKNSSIKEKQLFQSNIDSLSFSLKETTTTTTTTTTTTTTSTTSNTGNDSPLSIESPISSPVLIENTTNTTNTTTTNTTNSSMLSIKDYDDGDEPEDTTVVHWKLDRTEGPLRMRRKLKRNYFGSDYKGLSKQNRFGRSRRTTLEKYSNEIETFYIDQDCGDGLGNIIITIVNEPPLPHQTTSYKEIEFFNESQSQSSSSSNIDNLNPNTGLPYNKSTNNLSNVNNVNNNNNNNSNNINVSGNNTIGPSSSKSPLRNSRSMSIGSSATKSPSRQNVKDVFNLDNNNSNSNNNNSNNNNNNNNNNNNNNNNNNNNNNNNNNNNNNNNNNFNNNLSPTLNSILPNLNNISINSGSNTIGPNSSMSSILSPRIGEFDENGVDVSSPNSSSLSSSSSNNQIEEEKFIGSWRCQMVVPVGVIPGQFTITSHYLTFDKDIQIVDQRTGRTFSPSLNGIQQQQQQQQDQDFGSVKIKNTYIWKVKDLVEIHRVRYLLRWNSIEIFLNHKSYMINFSKEQESIQIFNKIVALHPPNLRVKWSDHPSKIIKKSKLTMKWKNREISNFEYLMSLNTIAGRTYNDISQYPVFPQIISDYKSEFLDLNDSRSFRDLSKPMGALNQQRLDTLIKRYQSMQSAQDPTMPPFLYGSHYSNFGIVAYYQVRLEPFTSFHLSLQSGVFDHPQRMFESMDKMWDGVSGNNLADVKELIPEFFYMPEFINNGEGFNFGFTNSKSGDLILPNWAHQSPELFIQINREALESEYVSMNLHHWIDLIFGFKQNGPAAQEANNVFFHLTYENNAALQRDDPDERQSIASQIKEFGQTPPQLFSKPHPIRKTLQEISKPQKDLFARIAQNLFSPSNNGTINSSFSSTSTSTSTSSPPPSTLNSPQGPSLQYPFKVLKTKSSLPLVHISSCQDSDIVVLVYRDGVMAVNQFVPSPNGNLPFTFDIDKTLSTYKEKQIDTLFMSDSVTCISNCFAITPDGKFMFSCATWDSVFKCSNIQNGRVHRLYRDFHHDMVTCISLGSNGKHFATASSDTTILVWNDVDHLIKDSKAKPSYRLCSHDEPVHCLDINEEWDLIASGSMDKKLILHSLGKGHYQRSMIHNGAVEIVKISTVGQTIISYCSMSFLYVHSFNGKLLKIQQSDEKIYDAKLTGESVKKGGVLGVGSSTQYLVTGGTRGVKVRSLPDLNIVHAFDSPAAIKTIELVAHEKYMLIGLNDGNLVIIPFDVKDL.

Disordered stretches follow at residues 948 to 969, 996 to 1065, 1160 to 1303, and 1343 to 1363; these read STSL…TSTG, TTTT…DEPE, NESQ…NNLS, and DENG…SSSN. The span at 996–1049 shows a compositional bias: low complexity; the sequence is TTTTTTTTTTTTTTSTTSNTGNDSPLSIESPISSPVLIENTTNTTNTTTTNTTN. Polar residues predominate over residues 1171–1187; the sequence is NIDNLNPNTGLPYNKST. Over residues 1188–1231 the composition is skewed to low complexity; sequence NNLSNVNNVNNNNNNNSNNINVSGNNTIGPSSSKSPLRNSRSMS. Residues 1232–1243 show a composition bias toward polar residues; sequence IGSSATKSPSRQ. 2 stretches are compositionally biased toward low complexity: residues 1253–1303 and 1350–1363; these read NNNS…NNLS and SSPN…SSSN. Residues 1366–1491 enclose the BEACH-type PH domain; sequence IEEEKFIGSW…ESIQIFNKIV (126 aa). The region spanning 1504–1795 is the BEACH domain; it reads DHPSKIIKKS…QLFSKPHPIR (292 aa). Residues 1823-1849 show a composition bias toward low complexity; the sequence is GTINSSFSSTSTSTSTSSPPPSTLNSP. Positions 1823 to 1851 are disordered; that stretch reads GTINSSFSSTSTSTSTSSPPPSTLNSPQG. 3 WD repeats span residues 1973 to 2012, 2022 to 2061, and 2156 to 2192; these read FHHD…IKDS, SHDE…YQRS, and DSPA…VKDL.

This Dictyostelium discoideum (Social amoeba) protein is BEACH domain-containing protein lvsE (lvsE).